The sequence spans 458 residues: ATP synthase subunit beta (458 aa).

Residue 148–155 (GGAGVGKT) coordinates ATP.

The protein belongs to the ATPase alpha/beta chains family. In terms of assembly, F-type ATPases have 2 components, CF(1) - the catalytic core - and CF(0) - the membrane proton channel. CF(1) has five subunits: alpha(3), beta(3), gamma(1), delta(1), epsilon(1). CF(0) has three main subunits: a(1), b(2) and c(9-12). The alpha and beta chains form an alternating ring which encloses part of the gamma chain. CF(1) is attached to CF(0) by a central stalk formed by the gamma and epsilon chains, while a peripheral stalk is formed by the delta and b chains.

The protein resides in the cell inner membrane. The catalysed reaction is ATP + H2O + 4 H(+)(in) = ADP + phosphate + 5 H(+)(out). Its function is as follows. Produces ATP from ADP in the presence of a proton gradient across the membrane. The catalytic sites are hosted primarily by the beta subunits. This chain is ATP synthase subunit beta, found in Pseudomonas putida (strain W619).